A 121-amino-acid polypeptide reads, in one-letter code: Cytochrome B5-like protein (121 aa).

A helical transmembrane segment spans residues 1–21 (MIAVIGLLLGFLVSALFLIQG). The segment at 24-49 (RRTNDNQEKKRSSSEPVEDVVRPKSY) is disordered. Basic and acidic residues predominate over residues 26–36 (TNDNQEKKRSS). The Cytochrome b5 heme-binding domain maps to 46–121 (PKSYSKSEVA…IEDFYIGELH (76 aa)). Residues His81 and His104 each contribute to the heme site.

This sequence belongs to the cytochrome b5 family.

Its subcellular location is the membrane. In Arabidopsis thaliana (Mouse-ear cress), this protein is Cytochrome B5-like protein.